Here is a 231-residue protein sequence, read N- to C-terminus: Orotidine 5'-phosphate decarboxylase (231 aa).

Substrate-binding positions include D12, K34, 61–70, T116, R177, Q186, G206, and R207; that span reads DMKLLDIDNT. K63 acts as the Proton donor in catalysis.

It belongs to the OMP decarboxylase family. Type 1 subfamily. In terms of assembly, homodimer.

The enzyme catalyses orotidine 5'-phosphate + H(+) = UMP + CO2. It participates in pyrimidine metabolism; UMP biosynthesis via de novo pathway; UMP from orotate: step 2/2. Functionally, catalyzes the decarboxylation of orotidine 5'-monophosphate (OMP) to uridine 5'-monophosphate (UMP). The chain is Orotidine 5'-phosphate decarboxylase from Allorhizobium ampelinum (strain ATCC BAA-846 / DSM 112012 / S4) (Agrobacterium vitis (strain S4)).